Reading from the N-terminus, the 289-residue chain is MRKLTSFACGTGAGLAAYYLQRLRDPQTAVQNSWTHSDKPVDPWALWDTNWDCREPRALVRPLRNSQPEEENRYNAELEKAKAKKARHIILVRHGEYLDVGDSDDTHHLTERGRKQAEFTGKRLCELGIKWDKVVASTMLRAQETSDIILKQIDFEKEKVVNCAFLREGAPIPPQPPVGHWKPEASQFLRDGSRIEAGFRRYFHRAYPDQEKESYTLIVGHGNVIRYFVCRALQFPAEGWLRININHASITWLTISPSGNVSIKYLGDSGFMPAELLTNRIPRDVKNVV.

A helical transmembrane segment spans residues 7-23 (FACGTGAGLAAYYLQRL).

The protein belongs to the phosphoglycerate mutase family. BPG-dependent PGAM subfamily. Interacts with Pk92B/ASK1.

It localises to the mitochondrion outer membrane. The catalysed reaction is O-phospho-L-seryl-[protein] + H2O = L-seryl-[protein] + phosphate. It catalyses the reaction O-phospho-L-threonyl-[protein] + H2O = L-threonyl-[protein] + phosphate. Its function is as follows. Displays phosphatase activity for serine/threonine residues, and dephosphorylates and activates Pk92B kinase. Has apparently no phosphoglycerate mutase activity. The sequence is that of Serine/threonine-protein phosphatase Pgam5, mitochondrial from Drosophila simulans (Fruit fly).